A 4391-amino-acid polypeptide reads, in one-letter code: Basement membrane-specific heparan sulfate proteoglycan core protein (4391 aa).

A signal peptide spans 1–21 (MGWRAAGALLLALLLHGRLLA). A glycan (O-linked (GalNAc...) threonine) is linked at T42. Residues S65, S71, and S76 are each glycosylated (O-linked (Xyl...) (heparan sulfate) serine). One can recognise an SEA domain in the interval 80–191 (QMVYFRALVN…QGFQFRRLGT (112 aa)). The N-linked (GlcNAc...) asparagine glycan is linked to N89. LDL-receptor class A domains follow at residues 198 to 235 (ACTE…LNCE), 284 to 320 (PCGP…LDCG), 324 to 360 (PCEP…ANCP), and 367 to 404 (VCGP…FGCM). 12 disulfide bridges follow: C199/C212, C206/C225, C219/C234, C285/C297, C292/C310, C304/C319, C325/C337, C332/C350, C344/C359, C368/C381, C375/C394, and C388/C403. The Ig-like C2-type 1 domain occupies 405–504 (PPQVVTPPRE…VLELVPQRGP (100 aa)). Residues 521-530 (CFCFGITSVC) form the Laminin EGF-like 1; first part domain. In terms of domain architecture, Laminin IV type A 1 spans 538 to 730 (DQIRLRFDQP…SHGRAHSVEE (193 aa)). N554 is a glycosylation site (N-linked (GlcNAc...) asparagine). Residues 731-763 (CRCPIGYSGLSCESCDAHFTRVPGGPYLGTCSG) form the Laminin EGF-like 1; second part domain. 11 cysteine pairs are disulfide-bonded: C764-C773, C766-C780, C783-C792, C795-C811, C814-C829, C816-C839, C842-C851, C854-C869, C879-C892, C894-C903, and C906-C921. Laminin EGF-like domains lie at 764–813 (CNCN…SCRP) and 814–871 (CPCP…KCRP). In terms of domain architecture, Laminin EGF-like 4; truncated spans 879–923 (CDERGSMGTSGEACRCKNNVVGRLCNECADGSFHLSTRNPDGCLK). Residues 924 to 933 (CFCMGVSRHC) form the Laminin EGF-like 5; first part domain. Residues 941–1125 (AQLHGASEEP…GQDPALEVEQ (185 aa)) form the Laminin IV type A 2 domain. The region spanning 1126–1158 (CSCPPGYRGPSCQDCDTGYTRTPSGLYLGTCER) is the Laminin EGF-like 5; second part domain. 12 cysteine pairs are disulfide-bonded: C1159-C1168, C1161-C1175, C1178-C1187, C1190-C1206, C1209-C1224, C1211-C1234, C1237-C1246, C1249-C1263, C1275-C1287, C1277-C1293, C1295-C1304, and C1307-C1322. Laminin EGF-like domains are found at residues 1159-1208 (CSCH…DCQL), 1209-1265 (CPCY…PCQR), and 1275-1324 (CNCD…GCLP). The Laminin EGF-like 9; first part domain occupies 1325–1334 (CFCMGITQQC). Residues 1344-1529 (ISTHFAPGDF…NRPRALEVEE (186 aa)) enclose the Laminin IV type A 3 domain. One can recognise a Laminin EGF-like 9; second part domain in the interval 1530 to 1562 (CRCPPGYIGLSCQDCAPGYTRTGSGLYLGHCEL). Disulfide bonds link C1563–C1572, C1565–C1579, C1582–C1591, C1594–C1610, C1613–C1628, C1615–C1638, C1641–C1650, and C1653–C1668. Laminin EGF-like domains lie at 1563-1612 (CECN…DCQP) and 1613-1670 (CACP…QCLP). Ig-like C2-type domains are found at residues 1677 to 1771 (LVVE…SKPI), 1772 to 1865 (TVTV…TLSA), 1866 to 1955 (PVVS…GGGG), 1956 to 2051 (PRVQ…ASPP), 2052 to 2151 (PVKI…PGST), 2152 to 2244 (RPIR…PGPI), 2245 to 2340 (PPVR…AGST), 2341 to 2436 (QPIR…LGVT), 2437 to 2533 (PTVR…QGVA), 2534 to 2629 (YPVR…PSVS), 2630 to 2726 (PPIR…PGSS), 2727 to 2826 (MPIR…PGGA), 2827 to 2924 (PPIR…PGLA), 2925 to 3021 (QPIY…RLRS), 3022 to 3112 (PVIS…HGPP), 3113 to 3211 (TVSV…APGA), 3212 to 3298 (PQVQ…VESP), 3299 to 3399 (PYAT…AGST), 3400 to 3488 (PTVQ…ALPS), 3489 to 3574 (VLIN…LVQA), and 3575 to 3662 (LPQI…PERV). N1755 carries an N-linked (GlcNAc...) asparagine glycan. Residue N2121 is glycosylated (N-linked (GlcNAc...) asparagine). The segment at 2994-3014 (ASGPGPEQEASFTVTVPPSEG) is disordered. A glycan (O-linked (Xyl...) (chondroitin sulfate) serine) is linked at S2995. Residues 3003–3014 (ASFTVTVPPSEG) show a composition bias toward polar residues. Residues N3072 and N3105 are each glycosylated (N-linked (GlcNAc...) asparagine). An N-linked (GlcNAc...) asparagine glycan is attached at N3279. Residues 3663 to 3843 (VPYFTQTPYS…DLNLTAHGIS (181 aa)) form the Laminin G-like 1 domain. Residues N3780 and N3836 are each glycosylated (N-linked (GlcNAc...) asparagine). 7 disulfides stabilise this stretch: C3819–C3845, C3848–C3859, C3853–C3869, C3871–C3880, C3888–C3899, C3893–C3910, and C3912–C3921. EGF-like domains lie at 3844 to 3881 (HCPT…SRCE) and 3884 to 3922 (QALH…LRCE). Residues 3928-4103 (TTPSLSGAGS…LGSQGIGQCY (176 aa)) enclose the Laminin G-like 2 domain. A glycan (O-linked (Xyl...) (chondroitin sulfate) serine) is linked at S3933. The N-linked (GlcNAc...) asparagine glycan is linked to N4068. 7 disulfide bridges follow: C4076-C4102, C4108-C4119, C4113-C4129, C4131-C4140, C4147-C4159, C4153-C4164, and C4166-C4175. EGF-like domains lie at 4104 to 4141 (DSSP…DLCE) and 4143 to 4176 (EENP…PRCQ). Residues 4149–4151 (LRE) are mediates motor neuron attachment. S4179 and S4193 each carry an O-linked (Xyl...) (chondroitin sulfate) serine glycan. Residues 4201-4389 (QYGAYFHDDG…AQAGANTRPC (189 aa)) enclose the Laminin G-like 3 domain. 2 residues coordinate Ca(2+): D4258 and L4275. The segment at 4299-4301 (LRE) is mediates motor neuron attachment. Residues A4325 and N4327 each coordinate Ca(2+). C4355 and C4389 are joined by a disulfide. The tract at residues 4364-4391 (ARPGAPPPQPLDLQHRAQAGANTRPCPS) is disordered.

Has a strong tendency to aggregate in dimers or stellate structures. Interacts with other basement membrane components such as laminin, prolargin and collagen type IV. Interacts with COL13A1. Interacts with FGFBP1. Interacts with VWA1. Interacts (via C-terminus) with ECM1 (via C-terminus). Interacts with SVEP1. Proteolytic processing produces the C-terminal angiogenic peptide, endorepellin. This peptide can be further processed to produce the LG3 peptide. In terms of processing, O-glycosylated with core 1 or possibly core 8 glycans. Contains three heparan sulfate chains. Also contains chondroitin sulfate. In terms of tissue distribution, detected in cerebrospinal fluid, fibroblasts and urine (at protein level).

The protein resides in the secreted. The protein localises to the extracellular space. It is found in the extracellular matrix. It localises to the basement membrane. Functionally, integral component of basement membranes. Component of the glomerular basement membrane (GBM), responsible for the fixed negative electrostatic membrane charge, and which provides a barrier which is both size- and charge-selective. It serves as an attachment substrate for cells. Plays essential roles in vascularization. Critical for normal heart development and for regulating the vascular response to injury. Also required for avascular cartilage development. Anti-angiogenic and anti-tumor peptide that inhibits endothelial cell migration, collagen-induced endothelial tube morphogenesis and blood vessel growth in the chorioallantoic membrane. Blocks endothelial cell adhesion to fibronectin and type I collagen. Anti-tumor agent in neovascularization. Interaction with its ligand, integrin alpha2/beta1, is required for the anti-angiogenic properties. Evokes a reduction in phosphorylation of receptor tyrosine kinases via alpha2/beta1 integrin-mediated activation of the tyrosine phosphatase, PTPN6. In terms of biological role, has anti-angiogenic properties that require binding of calcium ions for full activity. This Homo sapiens (Human) protein is Basement membrane-specific heparan sulfate proteoglycan core protein (HSPG2).